The following is a 142-amino-acid chain: Transcriptional regulator MraZ (142 aa).

SpoVT-AbrB domains are found at residues 5–51 (ASSL…PRTE) and 77–120 (AMDV…DKAT).

It belongs to the MraZ family. Forms oligomers.

It localises to the cytoplasm. The protein localises to the nucleoid. The polypeptide is Transcriptional regulator MraZ (Delftia acidovorans (strain DSM 14801 / SPH-1)).